The chain runs to 694 residues: Proprotein convertase subtilisin/kexin type 9 (694 aa).

A signal peptide spans 1-34 (MGTHCSAWLRWPLLPLLPPLLLLLLLLCPTGAGA). A propeptide spanning residues 35–155 (QDEDGDYEEL…IEEDSFVFAQ (121 aa)) is cleaved from the precursor. Position 41 is a sulfotyrosine (Tyr41). Ser50 bears the Phosphoserine mark. Residues 158 to 470 (PWNLERIIPA…RTVWSAHSGP (313 aa)) enclose the Peptidase S8 domain. Active-site charge relay system residues include Asp189 and His229. 2 cysteine pairs are disulfide-bonded: Cys226/Cys258 and Cys326/Cys361. Ser389 acts as the Charge relay system in catalysis. The interval 453–694 (ETGGQLLCRT…RPSAKASWVQ (242 aa)) is C-terminal domain. Cystine bridges form between Cys460–Cys530, Cys480–Cys529, and Cys489–Cys512. The Cell attachment site signature appears at 499–501 (RGD). N-linked (GlcNAc...) asparagine glycosylation is present at Asn536. 6 disulfides stabilise this stretch: Cys537/Cys604, Cys555/Cys603, Cys565/Cys591, Cys611/Cys682, Cys629/Cys681, and Cys638/Cys657. The residue at position 691 (Ser691) is a Phosphoserine.

The protein belongs to the peptidase S8 family. In terms of assembly, monomer. Can self-associate to form dimers and higher multimers which may have increased LDLR degrading activity. The precursor protein but not the mature protein may form multimers. Interacts with APOB, VLDLR, LRP8/APOER2 and BACE1. The full-length immature form (pro-PCSK9) interacts with SCNN1A, SCNN1B and SCNN1G. The pro-PCSK9 form (via C-terminal domain) interacts with LDLR. Interacts (via the C-terminal domain) with ANXA2 (via repeat Annexin 1); the interaction inhibits the degradation of LDLR. It depends on Ca(2+) as a cofactor. Post-translationally, cleavage by furin and PCSK5 generates a truncated inactive protein that is unable to induce LDLR degradation. Undergoes autocatalytic cleavage in the endoplasmic reticulum to release the propeptide from the N-terminus and the cleavage of the propeptide is strictly required for its maturation and activation. The cleaved propeptide however remains associated with the catalytic domain through non-covalent interactions, preventing potential substrates from accessing its active site. As a result, it is secreted from cells as a propeptide-containing, enzymatically inactive protein. In terms of processing, phosphorylation protects the propeptide against proteolysis. As to expression, hepatocytes, kidney mesenchymal cells, intestinal ileum, colon epithelia and embryonic brain telencephalon neurons.

It localises to the cytoplasm. It is found in the secreted. Its subcellular location is the endosome. The protein localises to the lysosome. The protein resides in the cell surface. It localises to the endoplasmic reticulum. It is found in the golgi apparatus. Its proteolytic activity is autoinhibited by the non-covalent binding of the propeptide to the catalytic domain. Inhibited by EGTA. Its function is as follows. Crucial player in the regulation of plasma cholesterol homeostasis. Binds to low-density lipid receptor family members: low density lipoprotein receptor (LDLR), very low density lipoprotein receptor (VLDLR), apolipoprotein E receptor (LRP1/APOER) and apolipoprotein receptor 2 (LRP8/APOER2), and promotes their degradation in intracellular acidic compartments. Acts via a non-proteolytic mechanism to enhance the degradation of the hepatic LDLR through a clathrin LDLRAP1/ARH-mediated pathway. May prevent the recycling of LDLR from endosomes to the cell surface or direct it to lysosomes for degradation. Can induce ubiquitination of LDLR leading to its subsequent degradation. Inhibits intracellular degradation of APOB via the autophagosome/lysosome pathway in a LDLR-independent manner. Involved in the disposal of non-acetylated intermediates of BACE1 in the early secretory pathway. Inhibits epithelial Na(+) channel (ENaC)-mediated Na(+) absorption by reducing ENaC surface expression primarily by increasing its proteasomal degradation. Regulates neuronal apoptosis via modulation of LRP8/APOER2 levels and related anti-apoptotic signaling pathways. In Mus musculus (Mouse), this protein is Proprotein convertase subtilisin/kexin type 9 (Pcsk9).